The chain runs to 175 residues: MSDNVSDHKPIVLEHRQVGEAVGDFPPDRRLQLPLTAEERTVLRGRRCSDCGLSLLLQLPREGPLQPGDRLLDRSRSWEVVVIAAPEPLLRVQADSVLELLQAAYHLGNRHVALELHDGELLLLKDSVLEAMLRSRGLRVSACERPFLPEGGAYGGSPSHAHRHSHVHSHSHETP.

The tract at residues 151-175 (GGAYGGSPSHAHRHSHVHSHSHETP) is disordered. Positions 160–169 (HAHRHSHVHS) are enriched in basic residues.

This sequence belongs to the UreE family.

The protein localises to the cytoplasm. Involved in urease metallocenter assembly. Binds nickel. Probably functions as a nickel donor during metallocenter assembly. This chain is Urease accessory protein UreE, found in Synechococcus sp. (strain WH7805).